Consider the following 875-residue polypeptide: Alanine--tRNA ligase (875 aa).

Residues H564, H568, C666, and H670 each contribute to the Zn(2+) site.

It belongs to the class-II aminoacyl-tRNA synthetase family. As to quaternary structure, homotetramer. Requires Zn(2+) as cofactor.

The protein resides in the cytoplasm. It carries out the reaction tRNA(Ala) + L-alanine + ATP = L-alanyl-tRNA(Ala) + AMP + diphosphate. Functionally, catalyzes the attachment of alanine to tRNA(Ala) in a two-step reaction: alanine is first activated by ATP to form Ala-AMP and then transferred to the acceptor end of tRNA(Ala). Also edits incorrectly charged Ser-tRNA(Ala) and Gly-tRNA(Ala) via its editing domain. The chain is Alanine--tRNA ligase from Yersinia pseudotuberculosis serotype O:1b (strain IP 31758).